The following is a 168-amino-acid chain: Ribosome maturation factor RimM (168 aa).

Residues 93–168 (EDEFYQSDLV…IVLNIPEFID (76 aa)) form the PRC barrel domain.

The protein belongs to the RimM family. As to quaternary structure, binds ribosomal protein uS19.

It is found in the cytoplasm. Its function is as follows. An accessory protein needed during the final step in the assembly of 30S ribosomal subunit, possibly for assembly of the head region. Essential for efficient processing of 16S rRNA. May be needed both before and after RbfA during the maturation of 16S rRNA. It has affinity for free ribosomal 30S subunits but not for 70S ribosomes. This chain is Ribosome maturation factor RimM, found in Wolbachia pipientis wMel.